The following is a 363-amino-acid chain: Aminomethyltransferase (363 aa).

The protein belongs to the GcvT family. In terms of assembly, the glycine cleavage system is composed of four proteins: P, T, L and H.

It carries out the reaction N(6)-[(R)-S(8)-aminomethyldihydrolipoyl]-L-lysyl-[protein] + (6S)-5,6,7,8-tetrahydrofolate = N(6)-[(R)-dihydrolipoyl]-L-lysyl-[protein] + (6R)-5,10-methylene-5,6,7,8-tetrahydrofolate + NH4(+). In terms of biological role, the glycine cleavage system catalyzes the degradation of glycine. The protein is Aminomethyltransferase of Thioalkalivibrio sulfidiphilus (strain HL-EbGR7).